The following is a 284-amino-acid chain: Anaerobic dimethyl sulfoxide reductase chain YnfH (284 aa).

The Periplasmic segment spans residues 1 to 9; the sequence is MGNGWHEWP. The chain crosses the membrane as a helical span at residues 10 to 30; that stretch reads LVIFTVLGQCVVGALIVSGIG. At 31–45 the chain is on the cytoplasmic side; it reads WFAAKNDADRQRIVR. The helical transmembrane segment at 46–66 threads the bilayer; it reads GMFFLWLLMGVGFIASVMHLG. Residues 67–86 are Periplasmic-facing; sequence SPLRAFNSLNRIGASGLSNE. The helical transmembrane segment at 87 to 107 threads the bilayer; the sequence is IAAGSIFFAVGGLWWLVAVIG. Over 108–115 the chain is Cytoplasmic; the sequence is KMPQALGK. A helical membrane pass occupies residues 116-136; that stretch reads LWLLFSMALGVIFVWMMTCVY. Residues 137 to 148 are Periplasmic-facing; the sequence is QIDTVPTWHNGY. The chain crosses the membrane as a helical span at residues 149-169; that stretch reads TTLAFFLTVLLSGPILAAAIL. Residues 170–180 lie on the Cytoplasmic side of the membrane; that stretch reads RAARVTFNTTP. Residues 181–201 form a helical membrane-spanning segment; the sequence is FAIISVLALIACAGVIVLQGL. Over 202 to 222 the chain is Periplasmic; it reads SLASIHSSVQQASALVPDYAS. Residues 223-243 traverse the membrane as a helical segment; it reads LQVWRVVLLCAGLGCWLCPLI. At 244-250 the chain is on the cytoplasmic side; it reads RRREPHV. The helical transmembrane segment at 251–271 threads the bilayer; sequence AGLILGLILILGGEMIGRVLF. Topologically, residues 272–284 are periplasmic; that stretch reads YGLHMTVGMAIAG.

The protein belongs to the DmsC family. The complex consists of three subunits: YnfF, the reductase; YnfG, an electron transfer protein, and YnfH, a membrane anchor protein.

It is found in the cell inner membrane. Terminal reductase during anaerobic growth on various sulfoxide and N-oxide compounds. The C subunit anchors the other two subunits to the membrane and stabilize the catalytic subunits. The sequence is that of Anaerobic dimethyl sulfoxide reductase chain YnfH (ynfH) from Escherichia coli (strain K12).